The following is a 110-amino-acid chain: uncharacterized protein (110 aa).

This is an uncharacterized protein from Microplitis demolitor bracovirus (isolate Webb) (MdBV).